Consider the following 345-residue polypeptide: Nuclear hormone receptor family nhr-176 (345 aa).

The segment at residues 7 to 82 (IQPCLVCGQS…AGMLEKMVFS (76 aa)) is a DNA-binding region (nuclear receptor). Residues 10-30 (CLVCGQSSNSILFGAPSCRAC) form an NR C4-type zinc finger. The segment at 46-65 (NNCLGECSFAKKSMKPCQSC) adopts an NR C4-type; degenerate zinc-finger fold. Positions 92-342 (FEKSILEELE…CPLYAISTNS (251 aa)) constitute an NR LBD domain. Positions 331–342 (SGCPLYAISTNS) are AF-2.

It is found in the nucleus. Its function is as follows. Nuclear hormone receptor. Binds to xenobiotic ligand thiabendazole (TBZ), in vitro. Involved in the up-regulation of phase I detoxification genes, such as probable cytochrome P450 cyp-35d1, in response to TBZ. This chain is Nuclear hormone receptor family nhr-176, found in Caenorhabditis elegans.